A 563-amino-acid polypeptide reads, in one-letter code: Germacrene-A synthase (563 aa).

Mg(2+) contacts are provided by Asp-316, Asp-320, Asp-460, Thr-464, and Glu-468. The short motif at 316–320 (DDTYD) is the DDXXD motif element.

This sequence belongs to the terpene synthase family. Tpsa subfamily. It depends on Mg(2+) as a cofactor. Requires Mn(2+) as cofactor. As to expression, high expression in disk florets, moderate expression in ray florets and detected in leaves and stems, but not in roots.

It catalyses the reaction (2E,6E)-farnesyl diphosphate = (+)-(R)-germacrene A + diphosphate. The protein operates within secondary metabolite biosynthesis; terpenoid biosynthesis. Its function is as follows. Sesquiterpene synthase involved in germacrene A biosynthesis. May be involved in the biosynthesis of the sesquiterpene lactone matricine, one of the major active compounds of chamomile flowers. This chain is Germacrene-A synthase, found in Matricaria chamomilla var. recutita (German chamomile).